Here is a 357-residue protein sequence, read N- to C-terminus: Fructose-bisphosphate aldolase (357 aa).

Residues Arg49 and Lys140 each coordinate substrate. Residue Glu183 is the Proton acceptor of the active site. The active-site Schiff-base intermediate with dihydroxyacetone-P is the Lys225.

The protein belongs to the class I fructose-bisphosphate aldolase family.

The enzyme catalyses beta-D-fructose 1,6-bisphosphate = D-glyceraldehyde 3-phosphate + dihydroxyacetone phosphate. The protein operates within carbohydrate degradation; glycolysis; D-glyceraldehyde 3-phosphate and glycerone phosphate from D-glucose: step 4/4. The chain is Fructose-bisphosphate aldolase (fba) from Dictyostelium discoideum (Social amoeba).